Reading from the N-terminus, the 378-residue chain is UPF0754 membrane protein BCAH820_0954 (378 aa).

The next 2 helical transmembrane spans lie at 1–21 (MNIW…GGFT) and 357–377 (YLGA…LLFL).

This sequence belongs to the UPF0754 family.

It localises to the cell membrane. The chain is UPF0754 membrane protein BCAH820_0954 from Bacillus cereus (strain AH820).